Here is a 387-residue protein sequence, read N- to C-terminus: Lipid-A-disaccharide synthase (387 aa).

Belongs to the LpxB family.

The catalysed reaction is 2-N,3-O-bis[(3R)-3-hydroxytetradecanoyl]-alpha-D-glucosaminyl 1-phosphate + UDP-2-N,3-O-bis[(3R)-3-hydroxytetradecanoyl]-alpha-D-glucosamine = lipid A disaccharide (E. coli) + UDP + H(+). It catalyses the reaction a lipid X + a UDP-2-N,3-O-bis[(3R)-3-hydroxyacyl]-alpha-D-glucosamine = a lipid A disaccharide + UDP + H(+). Its pathway is glycolipid biosynthesis; lipid IV(A) biosynthesis; lipid IV(A) from (3R)-3-hydroxytetradecanoyl-[acyl-carrier-protein] and UDP-N-acetyl-alpha-D-glucosamine: step 5/6. Functionally, condensation of UDP-2,3-diacylglucosamine and 2,3-diacylglucosamine-1-phosphate to form lipid A disaccharide, a precursor of lipid A, a phosphorylated glycolipid that anchors the lipopolysaccharide to the outer membrane of the cell. The sequence is that of Lipid-A-disaccharide synthase from Blochmanniella pennsylvanica (strain BPEN).